We begin with the raw amino-acid sequence, 1348 residues long: Phosphoribosylformylglycinamidine synthase (1348 aa).

ATP contacts are provided by residues 300 to 311 (GAATGAGGEIRD) and A701. Residues D702, E741, N745, and D941 each contribute to the Mg(2+) site. Residue S943 participates in ATP binding. Residues 1099-1348 (VAILREQGVN…MFRNARVWCG (250 aa)) enclose the Glutamine amidotransferase type-1 domain. The active-site Nucleophile is the C1192. Residues H1313 and E1315 contribute to the active site.

In the N-terminal section; belongs to the FGAMS family. As to quaternary structure, monomer.

It is found in the cytoplasm. The enzyme catalyses N(2)-formyl-N(1)-(5-phospho-beta-D-ribosyl)glycinamide + L-glutamine + ATP + H2O = 2-formamido-N(1)-(5-O-phospho-beta-D-ribosyl)acetamidine + L-glutamate + ADP + phosphate + H(+). Its pathway is purine metabolism; IMP biosynthesis via de novo pathway; 5-amino-1-(5-phospho-D-ribosyl)imidazole from N(2)-formyl-N(1)-(5-phospho-D-ribosyl)glycinamide: step 1/2. Functionally, phosphoribosylformylglycinamidine synthase involved in the purines biosynthetic pathway. Catalyzes the ATP-dependent conversion of formylglycinamide ribonucleotide (FGAR) and glutamine to yield formylglycinamidine ribonucleotide (FGAM) and glutamate. The protein is Phosphoribosylformylglycinamidine synthase of Xanthomonas axonopodis pv. citri (strain 306).